The following is a 428-amino-acid chain: C4-dicarboxylate transport protein (428 aa).

8 consecutive transmembrane segments (helical) span residues 8–28 (VLYV…HLYP), 44–64 (LIKM…IAGM), 78–98 (LLYF…ATHI), 148–168 (GEIL…AHLG), 184–204 (VLFG…FGAM), 222–242 (LIGT…GAIA), 307–327 (IYMT…LTWM), and 355–375 (AATL…ILGI).

It belongs to the dicarboxylate/amino acid:cation symporter (DAACS) (TC 2.A.23) family.

The protein resides in the cell inner membrane. In terms of biological role, responsible for the transport of dicarboxylates such as succinate, fumarate, and malate from the periplasm across the membrane. This Burkholderia thailandensis (strain ATCC 700388 / DSM 13276 / CCUG 48851 / CIP 106301 / E264) protein is C4-dicarboxylate transport protein.